A 384-amino-acid polypeptide reads, in one-letter code: MIKKIPAILVLEDGTYYKGWSFQADQSIVTIGEVVFNTGMTGYQEIITDPSYFQQIVTFTYPEIGNTGINSEDIESQTISIKGLVAKNICKISSSWRQQESLVQYLNRYKIPFIFGIDTRSLTQYLRRSGTMNGCISNKNLNHAYLQRKISEVPHMTGLDLIPNVTTNIMYDWDEKSLPSWYLADRNREKIYSQLKVIVIDFGVKLNILRRLATLGCQITVMPASTPTQDILSCKPDGILLSNGPGDPSAVNYGIKTVKELLNQNIPIFGICMGHQILNLALEAKTFKLKFGHRGINHPSGLKQQVEITSQNHGFAVDLQSVLKLSLQVTHFNLNDITVAGTGHSRSPYFSVQYHPESSPGPHDADYLFEYFIEIMKQFRKEAN.

The tract at residues 1–192 (MIKKIPAILV…LADRNREKIY (192 aa)) is CPSase. Residues Ser51, Gly244, and Gly246 each contribute to the L-glutamine site. Residues 196-382 (KVIVIDFGVK…IEIMKQFRKE (187 aa)) form the Glutamine amidotransferase type-1 domain. Catalysis depends on Cys272, which acts as the Nucleophile. Residues Met273, Gln276, Asn312, Gly314, and Phe315 each coordinate L-glutamine. Active-site residues include His355 and Glu357.

The protein belongs to the CarA family. As to quaternary structure, composed of two chains; the small (or glutamine) chain promotes the hydrolysis of glutamine to ammonia, which is used by the large (or ammonia) chain to synthesize carbamoyl phosphate. Tetramer of heterodimers (alpha,beta)4.

The protein resides in the plastid. It is found in the chloroplast. It carries out the reaction hydrogencarbonate + L-glutamine + 2 ATP + H2O = carbamoyl phosphate + L-glutamate + 2 ADP + phosphate + 2 H(+). The enzyme catalyses L-glutamine + H2O = L-glutamate + NH4(+). The protein operates within amino-acid biosynthesis; L-arginine biosynthesis; carbamoyl phosphate from bicarbonate: step 1/1. Its pathway is pyrimidine metabolism; UMP biosynthesis via de novo pathway; (S)-dihydroorotate from bicarbonate: step 1/3. In terms of biological role, small subunit of the glutamine-dependent carbamoyl phosphate synthetase (CPSase). CPSase catalyzes the formation of carbamoyl phosphate from the ammonia moiety of glutamine, carbonate, and phosphate donated by ATP, constituting the first step of 2 biosynthetic pathways, one leading to arginine and/or urea and the other to pyrimidine nucleotides. The small subunit (glutamine amidotransferase) binds and cleaves glutamine to supply the large subunit with the substrate ammonia. The sequence is that of Carbamoyl phosphate synthase small chain from Porphyra purpurea (Red seaweed).